Here is a 141-residue protein sequence, read N- to C-terminus: Ribosome-binding factor A (141 aa).

The segment at 120–141 is disordered; the sequence is DEALRAQSAGARPAGDEDPYKP.

This sequence belongs to the RbfA family. As to quaternary structure, monomer. Binds 30S ribosomal subunits, but not 50S ribosomal subunits or 70S ribosomes.

Its subcellular location is the cytoplasm. One of several proteins that assist in the late maturation steps of the functional core of the 30S ribosomal subunit. Associates with free 30S ribosomal subunits (but not with 30S subunits that are part of 70S ribosomes or polysomes). Required for efficient processing of 16S rRNA. May interact with the 5'-terminal helix region of 16S rRNA. The polypeptide is Ribosome-binding factor A (Corynebacterium jeikeium (strain K411)).